Consider the following 210-residue polypeptide: Na(+)-translocating NADH-quinone reductase subunit D (210 aa).

6 helical membrane passes run Val-42 to Ile-62, Ile-66 to Val-86, Val-103 to Met-123, Phe-131 to Phe-151, Leu-154 to Trp-174, and Asn-178 to Val-198.

The protein belongs to the NqrDE/RnfAE family. Composed of six subunits; NqrA, NqrB, NqrC, NqrD, NqrE and NqrF.

It localises to the cell inner membrane. The catalysed reaction is a ubiquinone + n Na(+)(in) + NADH + H(+) = a ubiquinol + n Na(+)(out) + NAD(+). Functionally, NQR complex catalyzes the reduction of ubiquinone-1 to ubiquinol by two successive reactions, coupled with the transport of Na(+) ions from the cytoplasm to the periplasm. NqrA to NqrE are probably involved in the second step, the conversion of ubisemiquinone to ubiquinol. This is Na(+)-translocating NADH-quinone reductase subunit D from Psychromonas ingrahamii (strain DSM 17664 / CCUG 51855 / 37).